Here is a 640-residue protein sequence, read N- to C-terminus: Threonine--tRNA ligase (640 aa).

The TGS domain occupies 1–59 (MKIKVKLPDGKEKEYDRGITPAEIAKELGVKKAIGAVVNGELWDLKRPIENDCELRLVT). Positions 240–531 (DHRKLGPHLE…LIEHFAGAFP (292 aa)) are catalytic. Zn(2+) is bound by residues Cys332, His383, and His508.

It belongs to the class-II aminoacyl-tRNA synthetase family. As to quaternary structure, homodimer. Zn(2+) serves as cofactor.

It is found in the cytoplasm. It catalyses the reaction tRNA(Thr) + L-threonine + ATP = L-threonyl-tRNA(Thr) + AMP + diphosphate + H(+). In terms of biological role, catalyzes the attachment of threonine to tRNA(Thr) in a two-step reaction: L-threonine is first activated by ATP to form Thr-AMP and then transferred to the acceptor end of tRNA(Thr). Also edits incorrectly charged L-seryl-tRNA(Thr). In Thermotoga petrophila (strain ATCC BAA-488 / DSM 13995 / JCM 10881 / RKU-1), this protein is Threonine--tRNA ligase.